Here is a 494-residue protein sequence, read N- to C-terminus: Cytochrome P450 2A6 (494 aa).

The substrate site is built by F107 and N297. C439 is a binding site for heme.

It belongs to the cytochrome P450 family. Requires heme as cofactor. As to expression, liver.

The protein localises to the endoplasmic reticulum membrane. The protein resides in the microsome membrane. The enzyme catalyses 1,4-cineole + reduced [NADPH--hemoprotein reductase] + O2 = 2-exo-hydroxy-1,4-cineole + oxidized [NADPH--hemoprotein reductase] + H2O + H(+). In terms of biological role, exhibits a high coumarin 7-hydroxylase activity. Can act in the hydroxylation of the anti-cancer drugs cyclophosphamide and ifosphamide. Competent in the metabolic activation of aflatoxin B1. Constitutes the major nicotine C-oxidase. Acts as a 1,4-cineole 2-exo-monooxygenase. Possesses low phenacetin O-deethylation activity. This Homo sapiens (Human) protein is Cytochrome P450 2A6 (CYP2A6).